We begin with the raw amino-acid sequence, 190 residues long: Potassium-transporting ATPase KdpC subunit (190 aa).

Residues 9-29 (VMFILFTIICGGIYPSVVTGI) form a helical membrane-spanning segment.

This sequence belongs to the KdpC family. The system is composed of three essential subunits: KdpA, KdpB and KdpC.

The protein localises to the cell inner membrane. In terms of biological role, part of the high-affinity ATP-driven potassium transport (or Kdp) system, which catalyzes the hydrolysis of ATP coupled with the electrogenic transport of potassium into the cytoplasm. This subunit acts as a catalytic chaperone that increases the ATP-binding affinity of the ATP-hydrolyzing subunit KdpB by the formation of a transient KdpB/KdpC/ATP ternary complex. This is Potassium-transporting ATPase KdpC subunit from Citrifermentans bemidjiense (strain ATCC BAA-1014 / DSM 16622 / JCM 12645 / Bem) (Geobacter bemidjiensis).